Consider the following 331-residue polypeptide: Adenosine deaminase (331 aa).

The Zn(2+) site is built by H12 and H14. The substrate site is built by H14, D16, and G170. Position 197 (H197) interacts with Zn(2+). E200 serves as the catalytic Proton donor. D278 contacts Zn(2+).

The protein belongs to the metallo-dependent hydrolases superfamily. Adenosine and AMP deaminases family. Adenosine deaminase subfamily. Zn(2+) serves as cofactor.

It carries out the reaction adenosine + H2O + H(+) = inosine + NH4(+). It catalyses the reaction 2'-deoxyadenosine + H2O + H(+) = 2'-deoxyinosine + NH4(+). Functionally, catalyzes the hydrolytic deamination of adenosine and 2-deoxyadenosine. The chain is Adenosine deaminase from Vibrio vulnificus (strain YJ016).